The primary structure comprises 101 residues: Urease subunit beta (101 aa).

It belongs to the urease beta subunit family. In terms of assembly, heterotrimer of UreA (gamma), UreB (beta) and UreC (alpha) subunits. Three heterotrimers associate to form the active enzyme.

Its subcellular location is the cytoplasm. The catalysed reaction is urea + 2 H2O + H(+) = hydrogencarbonate + 2 NH4(+). It participates in nitrogen metabolism; urea degradation; CO(2) and NH(3) from urea (urease route): step 1/1. This chain is Urease subunit beta, found in Pseudomonas fluorescens (strain SBW25).